The primary structure comprises 120 residues: uncharacterized protein (120 aa).

It is found in the virion. This is an uncharacterized protein from Acanthamoeba polyphaga mimivirus (APMV).